Consider the following 245-residue polypeptide: NAD-dependent protein deacetylase (245 aa).

The 245-residue stretch at 1–245 folds into the Deacetylase sirtuin-type domain; that stretch reads MIFVQQFEEV…EFVEGLSSMK (245 aa). Positions 26, 30, 37, 38, 105, 107, 108, and 123 each coordinate NAD(+). Nicotinamide is bound at residue Phe37. Residues Ile107 and Asp108 each coordinate nicotinamide. His123 (proton acceptor) is an active-site residue. Zn(2+)-binding residues include Cys131, Cys134, Cys151, and Cys154. Residues Thr190, Ser191, Asn216, and Ile234 each contribute to the NAD(+) site.

This sequence belongs to the sirtuin family. Class U subfamily. It depends on Zn(2+) as a cofactor.

Its subcellular location is the cytoplasm. It catalyses the reaction N(6)-acetyl-L-lysyl-[protein] + NAD(+) + H2O = 2''-O-acetyl-ADP-D-ribose + nicotinamide + L-lysyl-[protein]. In terms of biological role, NAD-dependent protein deacetylase which modulates the activities of several enzymes which are inactive in their acetylated form. In Bacillus cereus (strain ATCC 14579 / DSM 31 / CCUG 7414 / JCM 2152 / NBRC 15305 / NCIMB 9373 / NCTC 2599 / NRRL B-3711), this protein is NAD-dependent protein deacetylase.